Here is a 219-residue protein sequence, read N- to C-terminus: MMASLFSVFDPTSSFLSNWLSMLIPLLFMVMSFWLIPSRPQFLAKSVLMGLNREMSLLMGPASFGANILVIALFLFILFNNFIGLFPYIFTATSHLAVTLSLAVPLWISFILYTWIKETTNALAHLVPLGTPAPLMPFMVLMEIISNMIRPITLSVRLAANMIAGHLLLTLLGAQGTLENLYVTSIVVFSQIILLMLEFSVAIIQSYVFMTLMTLYASE.

Helical transmembrane passes span 16 to 36 (LSNW…FWLI), 57 to 79 (LLMG…FILF), 96 to 116 (LAVT…YTWI), 122 to 142 (ALAH…MVLM), 158 to 178 (LAAN…QGTL), and 184 to 204 (TSIV…VAII).

It belongs to the ATPase A chain family. F-type ATPases have 2 components, CF(1) - the catalytic core - and CF(0) - the membrane proton channel. CF(1) has five subunits: alpha(3), beta(3), gamma(1), delta(1), epsilon(1). CF(0) has three main subunits: a, b and c.

The protein localises to the mitochondrion inner membrane. In terms of biological role, mitochondrial membrane ATP synthase (F(1)F(0) ATP synthase or Complex V) produces ATP from ADP in the presence of a proton gradient across the membrane which is generated by electron transport complexes of the respiratory chain. F-type ATPases consist of two structural domains, F(1) - containing the extramembraneous catalytic core and F(0) - containing the membrane proton channel, linked together by a central stalk and a peripheral stalk. During catalysis, ATP synthesis in the catalytic domain of F(1) is coupled via a rotary mechanism of the central stalk subunits to proton translocation. Key component of the proton channel; it may play a direct role in the translocation of protons across the membrane. The sequence is that of ATP synthase subunit a (ATP6) from Artemia franciscana (Brine shrimp).